The sequence spans 698 residues: Capon-like protein (698 aa).

The PID domain maps to 25–194 (FFHGITFQAK…SELLDVEQIS (170 aa)). The tract at residues 191 to 240 (EQISEQQLSEDGERGGGDNETPKKEHLAITPDLNHTQPQRPNHLDIMPSH) is disordered. Residues 201–217 (DGERGGGDNETPKKEHL) are compositionally biased toward basic and acidic residues. Coiled coils occupy residues 265 to 327 (RSEI…LASL), 379 to 484 (NQQL…LNAN), and 554 to 583 (LNED…GNLA). Positions 396–423 (SQHLQNLQQQQQQQQQQQQQQTQAAPTA) are enriched in low complexity. The segment at 396-460 (SQHLQNLQQQ…QQQQQQQQDA (65 aa)) is disordered. The segment covering 436–447 (YPSMSALQSISN) has biased composition (polar residues). Residues 448-458 (QLQQQQQQQQQ) show a composition bias toward low complexity. The tract at residues 588-698 (GGSTSTRDTS…RTTWARHTTK (111 aa)) is disordered. Residues 590–640 (STSTRDTSRSSSTLDSPSSPRLRSSNNNISPGSSNGNQNHNNNSNSNSSSS) are compositionally biased toward low complexity. Polar residues-rich tracts occupy residues 662–672 (LSATPSFITRS) and 679–698 (NRSQ…HTTK).

As to expression, expressed at higher level in wing imaginal disk.

In terms of biological role, putative adapter protein. This is Capon-like protein from Drosophila melanogaster (Fruit fly).